The primary structure comprises 187 residues: Elongation factor P (187 aa).

It belongs to the elongation factor P family.

It is found in the cytoplasm. It participates in protein biosynthesis; polypeptide chain elongation. Functionally, involved in peptide bond synthesis. Stimulates efficient translation and peptide-bond synthesis on native or reconstituted 70S ribosomes in vitro. Probably functions indirectly by altering the affinity of the ribosome for aminoacyl-tRNA, thus increasing their reactivity as acceptors for peptidyl transferase. The polypeptide is Elongation factor P (efp) (Synechocystis sp. (strain ATCC 27184 / PCC 6803 / Kazusa)).